Reading from the N-terminus, the 445-residue chain is MSTHLTETWEKAINIIKGELTEVSFNTWIKSINPISLENNSLKLAVPNDFTKGILESRYKDLIVNALKLLTSKKYNIDFIVTTEEKIEKNHNNEKSNIVVNDEMSTMLNPKYTFDSFVIGNSNRFAHAASLAVAESPAKAYNPLFIYGGVGLGKTHLMHAIGHYILHNNPKSQVVYVSSEKFTNELINSIKDDKNVEFRNKYRNIDILLVDDIQFIAGKERTQEEFFHTFNALYEANKQIIISSDRPPKEIPTLEDRLRSRFEWGLIADIQAPDFETRMAILKKKADVEKLNIPNEVMVYIATKIKSNIRELEGALIRIVAFSSLTNKEISVDLASEALKDIISSKQTRQVTIDIIQEVVANYYNLKIEDLKSARRTRNIAFPRQIAMYLSRKLTDMSLPKIGEEFGGRDHTTVIHAYEKISNNLKKDESLQNAIKELNKRINQK.

Residues 1–73 (MSTHLTETWE…VNALKLLTSK (73 aa)) are domain I, interacts with DnaA modulators. A domain II region spans residues 73–106 (KKYNIDFIVTTEEKIEKNHNNEKSNIVVNDEMST). The interval 107-323 (MLNPKYTFDS…GALIRIVAFS (217 aa)) is domain III, AAA+ region. Residues glycine 151, glycine 153, lysine 154, and threonine 155 each contribute to the ATP site. The segment at 324–445 (SLTNKEISVD…KELNKRINQK (122 aa)) is domain IV, binds dsDNA.

This sequence belongs to the DnaA family. Oligomerizes as a right-handed, spiral filament on DNA at oriC.

The protein resides in the cytoplasm. Its function is as follows. Plays an essential role in the initiation and regulation of chromosomal replication. ATP-DnaA binds to the origin of replication (oriC) to initiate formation of the DNA replication initiation complex once per cell cycle. Binds the DnaA box (a 9 base pair repeat at the origin) and separates the double-stranded (ds)DNA. Forms a right-handed helical filament on oriC DNA; dsDNA binds to the exterior of the filament while single-stranded (ss)DNA is stabiized in the filament's interior. The ATP-DnaA-oriC complex binds and stabilizes one strand of the AT-rich DNA unwinding element (DUE), permitting loading of DNA polymerase. After initiation quickly degrades to an ADP-DnaA complex that is not apt for DNA replication. Binds acidic phospholipids. This is Chromosomal replication initiator protein DnaA from Clostridium botulinum (strain Okra / Type B1).